A 255-amino-acid polypeptide reads, in one-letter code: RNA polymerase sigma-F factor (255 aa).

The Polymerase core binding signature appears at 61-74 (DLFQIGCIGLLKSV). Residues 221 to 240 (QSEVAERLGISQVQVSRLEK) constitute a DNA-binding region (H-T-H motif).

The protein belongs to the sigma-70 factor family. Interacts transiently with the RNAP core.

With respect to regulation, interaction with SpoIIAB inhibits sigma-F activity throughout the cell before the formation of the asymmetric septum; after septation the interaction is confined to the mother cell, and sigma-F activity is released in the prespore. Fin, a second, forespore-specific anti-sigma factor is induced in 2 successive waves by sigma-F and sigma-G, by antagonizing sigma-F it allows the switch to sigma-G factor and progression to the late sporulation development stages. Sigma factors are initiation factors that promote the attachment of RNA polymerase to specific initiation sites and are then released. This sigma factor is responsible for the expression of sporulation specific genes. Interaction with SpoIIAB inhibits sigma-F activity throughout the cell before the formation of the asymmetric septum; after septation the interaction is confined to the mother cell, and sigma F activity is released in the prespore. Responsible for expression of csfB (the anti-sigma-G factor Gin). Associates with the RNAP core only in stationary phase cells. This is RNA polymerase sigma-F factor (sigF) from Bacillus subtilis (strain 168).